A 290-amino-acid chain; its full sequence is Endoplasmic reticulum-Golgi intermediate compartment protein 1 (290 aa).

Topologically, residues 1 to 26 are cytoplasmic; sequence MPFDFRRFDIYRKVPKDLTQPTYTGA. A helical transmembrane segment spans residues 27 to 47; sequence IISICCCLFITFLFLSELTGF. At 48–254 the chain is on the lumenal side; that stretch reads IANEIVNELY…RRQPMYRFIT (207 aa). The N-linked (GlcNAc...) asparagine glycan is linked to asparagine 74. The chain crosses the membrane as a helical span at residues 255 to 275; that stretch reads TVCAIIGGTFTVAGILDSFIF. Residues 276–290 are Cytoplasmic-facing; sequence TASEAWKKIQLGKMQ.

It belongs to the ERGIC family.

The protein resides in the endoplasmic reticulum membrane. It localises to the endoplasmic reticulum-Golgi intermediate compartment membrane. The protein localises to the golgi apparatus membrane. Functionally, possible role in transport between endoplasmic reticulum and Golgi. This chain is Endoplasmic reticulum-Golgi intermediate compartment protein 1 (ergic1), found in Xenopus laevis (African clawed frog).